Here is a 307-residue protein sequence, read N- to C-terminus: Coproporphyrin III ferrochelatase (307 aa).

Fe-coproporphyrin III contacts are provided by residues Y12, R29, 45–46, S53, and Y124; that span reads RY. The Fe(2+) site is built by H181 and E263.

It belongs to the ferrochelatase family.

The protein localises to the cytoplasm. The enzyme catalyses Fe-coproporphyrin III + 2 H(+) = coproporphyrin III + Fe(2+). It functions in the pathway porphyrin-containing compound metabolism; protoheme biosynthesis. Involved in coproporphyrin-dependent heme b biosynthesis. Catalyzes the insertion of ferrous iron into coproporphyrin III to form Fe-coproporphyrin III. In Staphylococcus aureus (strain MRSA252), this protein is Coproporphyrin III ferrochelatase.